Here is a 517-residue protein sequence, read N- to C-terminus: Xyloglucan galactosyltransferase XLT2 (517 aa).

The tract at residues methionine 1–serine 31 is disordered. Residues methionine 1–arginine 49 are Cytoplasmic-facing. Residues proline 20 to serine 31 are compositionally biased toward polar residues. Residues serine 50–leucine 70 form a helical; Signal-anchor for type II membrane protein membrane-spanning segment. At arginine 71 to arginine 517 the chain is on the lumenal side. Residues asparagine 250, asparagine 288, asparagine 377, and asparagine 449 are each glycosylated (N-linked (GlcNAc...) asparagine).

Belongs to the glycosyltransferase 47 family. As to quaternary structure, interacts with CSLC4, FUT1, XXT2 and XXT5. Expressed in roots, hypocotyls, cotyledons, leaves, stems and flowers.

The protein resides in the golgi apparatus membrane. Functionally, functions in xyloglucan synthesis by adding side chains to the xylosylated glucan backbone. Involved in galactosylating hemicellulose xyloglucan (XyG) at the second position of the XXXG motif to form XLXG. Associates with other xyloglucan-synthesizing enzymes to form multiprotein complexes for xyloglucan synthesis in the Golgi. In Arabidopsis thaliana (Mouse-ear cress), this protein is Xyloglucan galactosyltransferase XLT2.